Reading from the N-terminus, the 134-residue chain is Small ribosomal subunit protein uS9 (134 aa).

Positions 109 to 134 (DARRTEPHKPSKSTKGPRAKRQKSYR) are disordered. Residues 118–134 (PSKSTKGPRAKRQKSYR) are compositionally biased toward basic residues.

This sequence belongs to the universal ribosomal protein uS9 family.

This is Small ribosomal subunit protein uS9 from Methanococcus aeolicus (strain ATCC BAA-1280 / DSM 17508 / OCM 812 / Nankai-3).